We begin with the raw amino-acid sequence, 355 residues long: Peptide chain release factor 1 (355 aa).

The residue at position 233 (Gln233) is an N5-methylglutamine.

Belongs to the prokaryotic/mitochondrial release factor family. Methylated by PrmC. Methylation increases the termination efficiency of RF1.

Its subcellular location is the cytoplasm. Peptide chain release factor 1 directs the termination of translation in response to the peptide chain termination codons UAG and UAA. This Bacillus mycoides (strain KBAB4) (Bacillus weihenstephanensis) protein is Peptide chain release factor 1.